A 428-amino-acid chain; its full sequence is Divergent protein kinase domain 1A (428 aa).

Over 1–27 (MARGLFSRAWLSKTHHFQARLSYIRVK) the chain is Cytoplasmic. Residues 28 to 48 (YLFLTWLAVFVSSWVVYVQYS) traverse the membrane as a helical segment. Residues 49 to 428 (TYTELCRGRE…WKQISHTTDS (380 aa)) are Lumenal-facing.

It belongs to the DIPK family. Among the many cysteines in the lumenal domain, most are probably involved in disulfide bonds.

It localises to the endoplasmic reticulum membrane. The polypeptide is Divergent protein kinase domain 1A (dipk1a) (Danio rerio (Zebrafish)).